The chain runs to 718 residues: Methionine--tRNA ligase (718 aa).

The 'HIGH' region motif lies at 27-37 (PYANGQIHIGH). Cys158, Cys161, Cys171, and Cys174 together coordinate Zn(2+). A 'KMSKS' region motif is present at residues 348–352 (KMSKS). Residue Lys351 coordinates ATP. The tRNA-binding domain maps to 612–718 (DFAKIDLRIA…SGAKPGMRVK (107 aa)).

This sequence belongs to the class-I aminoacyl-tRNA synthetase family. MetG type 1 subfamily. Homodimer. Zn(2+) is required as a cofactor.

It localises to the cytoplasm. The catalysed reaction is tRNA(Met) + L-methionine + ATP = L-methionyl-tRNA(Met) + AMP + diphosphate. Its function is as follows. Is required not only for elongation of protein synthesis but also for the initiation of all mRNA translation through initiator tRNA(fMet) aminoacylation. The sequence is that of Methionine--tRNA ligase from Burkholderia thailandensis (strain ATCC 700388 / DSM 13276 / CCUG 48851 / CIP 106301 / E264).